Consider the following 247-residue polypeptide: MSRKSTGAFLVILLLSMAAGGAVGAADDPYGAARAKMVREIEEDARRTSERIGKTALDPRVMEIMARVPRHEFVPAAERAYAYENRPLPIGYGQTISQPYIVAVMTDLLKVGSESTVLEVGTGSGYQAAILAEFVRSVYSIEIIEALAETAAERLKRLGYDNVRVRTGDGYHGWKEHAPFDGIVVTAAAGHIPPPLLDQLKPGGRMIIPVGGPFFVQQLMLVEKDEQGRTRTRQILPVAFVPLTGGH.

The active site involves Ser97.

It belongs to the methyltransferase superfamily. L-isoaspartyl/D-aspartyl protein methyltransferase family.

The protein resides in the cytoplasm. It carries out the reaction [protein]-L-isoaspartate + S-adenosyl-L-methionine = [protein]-L-isoaspartate alpha-methyl ester + S-adenosyl-L-homocysteine. Catalyzes the methyl esterification of L-isoaspartyl residues in peptides and proteins that result from spontaneous decomposition of normal L-aspartyl and L-asparaginyl residues. It plays a role in the repair and/or degradation of damaged proteins. The chain is Protein-L-isoaspartate O-methyltransferase 2 from Syntrophobacter fumaroxidans (strain DSM 10017 / MPOB).